The primary structure comprises 370 residues: Tyrosine-protein kinase transforming protein SEA (370 aa).

The Protein kinase domain maps to 60-323 (THRSRVIGRG…GLVCELERVL (264 aa)). ATP contacts are provided by residues 66–74 (IGRGHFGSV) and Lys92. Asp186 acts as the Proton acceptor in catalysis. Phosphotyrosine; by autocatalysis is present on Tyr216. Residues 345-370 (PPFPPAPRGQLPDSEDEEDEEEEVAE) form a disordered region. Over residues 357 to 370 (DSEDEEDEEEEVAE) the composition is skewed to acidic residues.

It belongs to the protein kinase superfamily. Tyr protein kinase family.

It catalyses the reaction L-tyrosyl-[protein] + ATP = O-phospho-L-tyrosyl-[protein] + ADP + H(+). The sequence is that of Tyrosine-protein kinase transforming protein SEA (V-SEA) from Galliformes.